The sequence spans 1509 residues: MNRPKREKKSITDVSTLKSLEQIKRARDGEKRTDQLQEEDDERKRLEQLKEQETEFDKEERKRKNRDFIEGDSGYRETSDNEDEDEDEDDDGDNSDDDYSLDEDDEDGGGDGENNDSDQEEAIEVGRKKKRQVKKKSKKDENGEPKVKTPRVKKTKEKKNEIVPEKNRIIQFINNPTESKSTSNNESFFFDKLKKSNSNTLNSTNSTLNSNELSSGGTMSSLDIESMLNDLQSAPDSELDLEKLKEKQLELEKKLEKEALLNKPTISTETIITEGVELDDNYEFDFDFNNPITTNNNNNNNTKTTTTTTTTTITNKNLNKVNSMSLPTRPQAQQFISPKQTNQEDWWSKTGVDSVVLVKKLEEIMPKNSDLLKMNMDGSLDFFLLTTEEDKQGRIILFGKVKLQASKSNKPGGGGGATKQTSITDEPVTKVPLKYASCCIIIEKMERNVFFLPRDYKLDQDGESTTIQVTDTMIEAELKQLVDRSKIKDYKLKKVKRTSAFDYSVPHKNGPVGEQHYVWKLSYPSNQMVFPNDIKGSTFRCAYGITSSPVELFLIKRKIMGPTWLTVSGITLNFDQKKSFARYEATVKSFKSIKPSMYKNEPSPPLTVMSISTKSVMKGSSHEVVMISSVIHESISADGPTENQDSIKYITAIRPLTGQVFPPDFQKPGASTTKQNVTICTSERNLLSFFCETVLNADPDVFAGHNIIGYDIEVILDRLEKLKVMEWAFIGRLKRSSFDRFNHISGRLICDSYLVCKEFLPKEKNYSLVELSKNQLSINKPEINYLSIEPYFETTKKLNIFIEINENDCYIIFLLIFKLLVFPLTKQLTNLAGNQWDKSLKSNRAERIEYLLLHNFHEKKYLLPDKIYQKSSSSGGGGGAKDKDNHAAYSGGLVLDPKIDFYDRYVVLLDFNSLYPSIIQEYNVCFTTINRVKRDDGKWEEAMPPPSSIEKGILPKVLHGLVSKRREIKKRMEQEKNKIIKAQYDIQQQAVKLIANSMYGCLGFSHSRFYALPLAELVTRKGRENLQKGASIVNKMCYDVIYGDTDSLMIYTGVGTFNEAETIGKEIQKKINDQYRGSVMEIGLDGIFKRLLLFKKKKYACLKEFRIDSTTTKCERENKGIDIVRRDYCDLTKDIGQWVLNLILGGEEKIALFSLIKEYLESVQQQIKDNTLAVEKFIITKTLSKQPEEYNDADIQPHVQVALQMRAKGLHVQPGEQVPYIITHGNSSSDIKEEWHHRARAPSDVESIQDVDIDWYLSQQILPSIQRNTGPIGMEPHELAQWLGMTGTKYQKQFDHLQQQSNQDFKPRYTLSTEDLRYKQCKSFNFECPYCGQNNEFTGIVKIDSEGKSESGFDCNQCHAKIPLKKLANQLQLNIRTYLKQYNDWDLRCTECEKVSKNYKETSYRCARPQCRGKMIQIMTSSKLFNQISFFSKLFRNDLSNSDNTTTIIPNEDQNTLKQAKQIIDSFLSKFDQYNVNLNSLLTPSQTLDSFNNYLASSRASIQYPILNK.

Residues 1-162 are disordered; the sequence is MNRPKREKKS…KKTKEKKNEI (162 aa). Composition is skewed to basic and acidic residues over residues 21-35 and 42-79; these read EQIK…RTDQ and ERKR…RETS. Residues 27–67 are a coiled coil; it reads RDGEKRTDQLQEEDDERKRLEQLKEQETEFDKEERKRKNRD. Acidic residues predominate over residues 80-123; sequence DNEDEDEDEDDDGDNSDDDYSLDEDDEDGGGDGENNDSDQEEAI. A compositionally biased stretch (basic residues) spans 127–137; it reads RKKKRQVKKKS. The span at 138-147 shows a compositional bias: basic and acidic residues; the sequence is KKDENGEPKV. Positions 148–157 are enriched in basic residues; it reads KTPRVKKTKE. Coiled-coil stretches lie at residues 234–263 and 958–989; these read APDS…LLNK and LHGL…IQQQ. Zn(2+) contacts are provided by C1328, C1331, C1355, C1358, C1389, C1392, C1406, and C1411. The segment at 1328–1358 adopts a CysA-type zinc-finger fold; it reads CPYCGQNNEFTGIVKIDSEGKSESGFDCNQC. Residues 1389–1411 carry the CysB motif motif; sequence CTECEKVSKNYKETSYRCARPQC.

It belongs to the DNA polymerase type-B family.

Its subcellular location is the nucleus. It carries out the reaction DNA(n) + a 2'-deoxyribonucleoside 5'-triphosphate = DNA(n+1) + diphosphate. In terms of biological role, polymerase alpha in a complex with DNA primase is a replicative polymerase. This chain is DNA polymerase alpha catalytic subunit (pola1), found in Dictyostelium discoideum (Social amoeba).